Here is a 705-residue protein sequence, read N- to C-terminus: Elongation factor G 2 (705 aa).

Residues 8–290 (ELYRNIGISA…AVLDYLPSPL (283 aa)) enclose the tr-type G domain. GTP-binding positions include 17–24 (AHIDAGKT), 88–92 (DTPGH), and 142–145 (NKMD).

Belongs to the TRAFAC class translation factor GTPase superfamily. Classic translation factor GTPase family. EF-G/EF-2 subfamily.

The protein localises to the cytoplasm. In terms of biological role, catalyzes the GTP-dependent ribosomal translocation step during translation elongation. During this step, the ribosome changes from the pre-translocational (PRE) to the post-translocational (POST) state as the newly formed A-site-bound peptidyl-tRNA and P-site-bound deacylated tRNA move to the P and E sites, respectively. Catalyzes the coordinated movement of the two tRNA molecules, the mRNA and conformational changes in the ribosome. The protein is Elongation factor G 2 of Bordetella avium (strain 197N).